Reading from the N-terminus, the 1807-residue chain is Atrochrysone carboxylic acid synthase Agnpks1 (1807 aa).

Residues 41-173 (LFRELHNHSK…ITGAQVIRQA (133 aa)) are N-terminal acylcarrier protein transacylase domain (SAT). The Ketosynthase family 3 (KS3) domain maps to 411–845 (QSKIAIVGMS…GGNTTILLEE (435 aa)). Catalysis depends on for beta-ketoacyl synthase activity residues cysteine 584, histidine 720, and histidine 763. The segment at 946–1265 (FTFTGQGASY…SLAALHCAGV (320 aa)) is malonyl-CoA:ACP transacylase (MAT) domain. A product template (PT) domain region spans residues 1334–1653 (TSTVHQIIQE…RILLSRFFSA (320 aa)). Residues 1338–1473 (HQIIQESIDG…ATLIYGDPSE (136 aa)) form an N-terminal hotdog fold region. Residues 1338–1648 (HQIIQESIDG…FRRYPRILLS (311 aa)) form the PKS/mFAS DH domain. Histidine 1370 acts as the Proton acceptor; for dehydratase activity in catalysis. The interval 1500-1648 (VANRFNHQMA…FRRYPRILLS (149 aa)) is C-terminal hotdog fold. Residue aspartate 1559 is the Proton donor; for dehydratase activity of the active site. The Carrier domain occupies 1732–1806 (DTTTAKAIQI…DLRSWLEEYY (75 aa)). Serine 1766 is modified (O-(pantetheine 4'-phosphoryl)serine).

It carries out the reaction holo-[ACP] + 8 malonyl-CoA + 8 H(+) = atrochrysone carboxyl-[ACP] + 8 CO2 + 8 CoA + 2 H2O. It functions in the pathway secondary metabolite biosynthesis. Non-reducing polyketide synthase; part of the gene cluster that mediates the biosynthesis of agnestins, dihydroxy-xanthone metabolites. The pathway begins with the assembly and cyclization of atrochrysone thioester by the non-reducing polyketide synthase Agnpks1. The atrochrysone carboxyl ACP thioesterase AgnL7 then breaks the thioester bond and releases the atrochrysone carboxylic acid as the first enzyme-free intermediate. The decarboxylase AgnL1 then catalyzes the concerted decarboxylation-elimination required to convert atochrysone carboxylic acid into emodin anthrone, which is further oxidized to emodin by the anthrone oxygenase AgnL2. Emodin then undergoes reduction catalyzed by the oxidoreductase AgnL4 to yield the dihydroquinone tautomer which is the substrate for reduction by the short chain dehydrogenase AgnL6 reduction to produce hydroxyketone, followed by AgnL8 dehydration and likely spontaneous autoxidation to chrysophanol. Baeyer-Villiger oxidation by the oxidase AgnL3 leads to monodictyphenone via cleavage of the C-10/C-10a bond of chrysophanol. Alternative cleavage at the C-4a/C-10 bond of chrysophanol also leads to the formation some cephalone F. Further conversion to agnestins A and B, requires reduction to dihydro-monodictyphenone, oxidation to agnestin C probably via an epoxide, and rearrangement to either agnestin A or agnestin B directly, although agnestin A or agnestin B can also interconvert. Within the cluster, AgnR1 is the only unassigned oxidoreductase present which could be involved in this conversion. However, AgnR1 seems not to be involved in this step, and thus genes involved in the proposed oxidation/reduction may be located elsewhere on the genome. Further agnestin A derivatives are probably formed by spontaneous decarboxylations, dehydrations and methanolysis reactions. This is Atrochrysone carboxylic acid synthase Agnpks1 from Paecilomyces divaricatus (Penicillium divaricatum).